The following is a 3779-amino-acid chain: Protein DDB_G0268328 (3779 aa).

Disordered stretches follow at residues 24–56, 1001–1028, 1137–1165, 1513–1538, 1656–1690, 2027–2054, 2144–2184, 2280–2325, 2508–2527, 2720–2748, 2975–3030, and 3427–3450; these read RQIKSQNKLQNKSQNNGNNNNNKDNNNINKDGS, HEDEEEEGDGDNSNNSNSQDSDGDDDDD, QDSTLPKRKQHGYYHQQQQQQQYHQQQQQ, PTNSIYNNNNNNNNNNNNTNSSSLLS, ETTVLEKETKETKDNNLENNNNNTNNSNNNNNNKE, SNSSNNNNNNNDGSTTSTTTLNRSDSNN, NNNN…NNSS, ISTT…NEQQ, QINNNNNNNEKEEEEEREEG, DGNNNNNNNNNQNNNNQNNNNNQNNNDSS, ESND…DSIK, and QSNTLNGTGGGGGNGGGNNGSGKL. Composition is skewed to low complexity over residues 26-56, 1011-1020, 1149-1165, and 1515-1538; these read IKSQNKLQNKSQNNGNNNNNKDNNNINKDGS, DNSNNSNSQD, YYHQQQQQQQYHQQQQQ, and NSIYNNNNNNNNNNNNTNSSSLLS. Residues 1656 to 1671 show a composition bias toward basic and acidic residues; the sequence is ETTVLEKETKETKDNN. Residues 1672-1687 are compositionally biased toward low complexity; that stretch reads LENNNNNTNNSNNNNN. Composition is skewed to low complexity over residues 2144–2182 and 2285–2322; these read NNNNNNNNNNNNNNNNNNNNNNNNNNNNNNNNNNNNNNN and NNNNNNNNNNNNNNNNNNNNNNNNNNNNNNNNNNNNNN. Composition is skewed to low complexity over residues 2722–2745 and 3015–3030; these read NNNNNNNNNQNNNNQNNNNNQNNN and SVNNNNNNNSNSDSIK. Gly residues predominate over residues 3433-3446; the sequence is GTGGGGGNGGGNNG.

This Dictyostelium discoideum (Social amoeba) protein is Protein DDB_G0268328.